We begin with the raw amino-acid sequence, 444 residues long: Alpha-(1,3)-fucosyltransferase B (444 aa).

Topologically, residues 1–6 are cytoplasmic; the sequence is MRLAQR. The helical; Signal-anchor for type II membrane protein transmembrane segment at 7–27 threads the bilayer; it reads YGIALVALLMVGATVLFFWSE. Residues 28–444 lie on the Lumenal side of the membrane; that stretch reads NIINYENIKF…GNNCSNSSNT (417 aa). 3 N-linked (GlcNAc...) asparagine glycosylation sites follow: Asn279, Asn437, and Asn440.

This sequence belongs to the glycosyltransferase 10 family.

Its subcellular location is the golgi apparatus. It is found in the golgi stack membrane. It functions in the pathway protein modification; protein glycosylation. The chain is Alpha-(1,3)-fucosyltransferase B (FucTB) from Drosophila melanogaster (Fruit fly).